We begin with the raw amino-acid sequence, 493 residues long: Phenmedipham hydrolase (493 aa).

The Acyl-ester intermediate role is filled by serine 188. Active-site charge relay system residues include glutamate 307 and histidine 402.

The protein belongs to the type-B carboxylesterase/lipase family. Monomer.

Its function is as follows. May degrade the phenylcarbamate herbicides phenmedipham and desmedipham cometabolically by hydrolyzing their central carbamate linkages. Conveys resistance to the herbicide phenmedipham. The chain is Phenmedipham hydrolase (pcd) from Pseudarthrobacter oxydans (Arthrobacter oxydans).